The chain runs to 289 residues: Light-independent protochlorophyllide reductase iron-sulfur ATP-binding protein (289 aa).

ATP is bound by residues 10–15 (GIGKST) and Lys-39. Ser-14 contributes to the Mg(2+) binding site. Positions 95 and 129 each coordinate [4Fe-4S] cluster. 180–181 (NR) serves as a coordination point for ATP.

The protein belongs to the NifH/BchL/ChlL family. Homodimer. Protochlorophyllide reductase is composed of three subunits; ChlL, ChlN and ChlB. It depends on [4Fe-4S] cluster as a cofactor.

The protein resides in the plastid. Its subcellular location is the chloroplast. The catalysed reaction is chlorophyllide a + oxidized 2[4Fe-4S]-[ferredoxin] + 2 ADP + 2 phosphate = protochlorophyllide a + reduced 2[4Fe-4S]-[ferredoxin] + 2 ATP + 2 H2O. It functions in the pathway porphyrin-containing compound metabolism; chlorophyll biosynthesis (light-independent). Its function is as follows. Component of the dark-operative protochlorophyllide reductase (DPOR) that uses Mg-ATP and reduced ferredoxin to reduce ring D of protochlorophyllide (Pchlide) to form chlorophyllide a (Chlide). This reaction is light-independent. The L component serves as a unique electron donor to the NB-component of the complex, and binds Mg-ATP. In Tetradesmus obliquus (Green alga), this protein is Light-independent protochlorophyllide reductase iron-sulfur ATP-binding protein.